A 354-amino-acid chain; its full sequence is Nicotinate-nucleotide--dimethylbenzimidazole phosphoribosyltransferase (354 aa).

E313 (proton acceptor) is an active-site residue.

The protein belongs to the CobT family.

It catalyses the reaction 5,6-dimethylbenzimidazole + nicotinate beta-D-ribonucleotide = alpha-ribazole 5'-phosphate + nicotinate + H(+). It functions in the pathway nucleoside biosynthesis; alpha-ribazole biosynthesis; alpha-ribazole from 5,6-dimethylbenzimidazole: step 1/2. Catalyzes the synthesis of alpha-ribazole-5'-phosphate from nicotinate mononucleotide (NAMN) and 5,6-dimethylbenzimidazole (DMB). The sequence is that of Nicotinate-nucleotide--dimethylbenzimidazole phosphoribosyltransferase from Ralstonia nicotianae (strain ATCC BAA-1114 / GMI1000) (Ralstonia solanacearum).